Here is a 92-residue protein sequence, read N- to C-terminus: Small ribosomal subunit protein uS19 (92 aa).

The segment at 72–92 (GEFSPTRSFRGHAGAKNKGKK) is disordered. Residues 80–92 (FRGHAGAKNKGKK) are compositionally biased toward basic residues.

This sequence belongs to the universal ribosomal protein uS19 family.

In terms of biological role, protein S19 forms a complex with S13 that binds strongly to the 16S ribosomal RNA. The sequence is that of Small ribosomal subunit protein uS19 from Flavobacterium johnsoniae (strain ATCC 17061 / DSM 2064 / JCM 8514 / BCRC 14874 / CCUG 350202 / NBRC 14942 / NCIMB 11054 / UW101) (Cytophaga johnsonae).